A 312-amino-acid chain; its full sequence is Olfactory receptor 2T8 (312 aa).

Residues 1–26 are Extracellular-facing; it reads MENGSYTSYFILLGLFNHTRAHQVLF. Residues asparagine 3 and asparagine 17 are each glycosylated (N-linked (GlcNAc...) asparagine). A helical membrane pass occupies residues 27-47; the sequence is MMVLSIVLTSLFGNSLMILLI. The Cytoplasmic segment spans residues 48-55; it reads HWDHRLHT. A helical transmembrane segment spans residues 56 to 76; the sequence is PMYFLLSQLSLMDVMLVSTTV. The Extracellular segment spans residues 77 to 96; that stretch reads PKMAADYLTGSKAISRAGCG. Cysteine 95 and cysteine 177 are oxidised to a cystine. The chain crosses the membrane as a helical span at residues 97–117; it reads AQIFFLPTLGGGECFLLAAMA. Residues 118-143 lie on the Cytoplasmic side of the membrane; sequence YDRYAAVCHPLRYPTLMSWQLCLRMN. Residues 144–164 traverse the membrane as a helical segment; sequence LSCWLLGAADGLLQAVATLSF. Topologically, residues 165 to 201 are extracellular; the sequence is PYCGAHEIDHFFCETPVLVRLACADTSVFENAMYICC. A helical transmembrane segment spans residues 202–222; that stretch reads VLMLLVPFSLILSSYGLILAA. The Cytoplasmic segment spans residues 223–234; sequence VLHMRSTEARKK. A helical membrane pass occupies residues 235-255; it reads AFATCSSHVAVVGLFYGAAIF. Topologically, residues 256–269 are extracellular; that stretch reads TYMRPKSHRSTNHD. The chain crosses the membrane as a helical span at residues 270–290; that stretch reads KVVSAFYTMFTPLLNPLIYSV. Residues 291-312 are Cytoplasmic-facing; the sequence is KNSEVKGALTRCMGRCVALSRE.

It belongs to the G-protein coupled receptor 1 family.

The protein resides in the cell membrane. Odorant receptor. This chain is Olfactory receptor 2T8 (OR2T8), found in Homo sapiens (Human).